The following is a 120-amino-acid chain: Large ribosomal subunit protein uL18 (120 aa).

The protein belongs to the universal ribosomal protein uL18 family. As to quaternary structure, part of the 50S ribosomal subunit; part of the 5S rRNA/L5/L18/L25 subcomplex. Contacts the 5S and 23S rRNAs.

Functionally, this is one of the proteins that bind and probably mediate the attachment of the 5S RNA into the large ribosomal subunit, where it forms part of the central protuberance. The polypeptide is Large ribosomal subunit protein uL18 (Clostridium botulinum (strain Eklund 17B / Type B)).